We begin with the raw amino-acid sequence, 688 residues long: Glycine--tRNA ligase beta subunit (688 aa).

The protein belongs to the class-II aminoacyl-tRNA synthetase family. Tetramer of two alpha and two beta subunits.

It is found in the cytoplasm. The catalysed reaction is tRNA(Gly) + glycine + ATP = glycyl-tRNA(Gly) + AMP + diphosphate. This chain is Glycine--tRNA ligase beta subunit, found in Vibrio parahaemolyticus serotype O3:K6 (strain RIMD 2210633).